Here is a 97-residue protein sequence, read N- to C-terminus: Co-chaperonin GroES (97 aa).

The protein belongs to the GroES chaperonin family. In terms of assembly, heptamer of 7 subunits arranged in a ring. Interacts with the chaperonin GroEL.

It localises to the cytoplasm. In terms of biological role, together with the chaperonin GroEL, plays an essential role in assisting protein folding. The GroEL-GroES system forms a nano-cage that allows encapsulation of the non-native substrate proteins and provides a physical environment optimized to promote and accelerate protein folding. GroES binds to the apical surface of the GroEL ring, thereby capping the opening of the GroEL channel. This chain is Co-chaperonin GroES, found in Pseudomonas entomophila (strain L48).